The following is a 425-amino-acid chain: Secernin-2 (425 aa).

Residue cysteine 12 is part of the active site. Threonine 52 carries the post-translational modification Phosphothreonine.

This sequence belongs to the peptidase C69 family. Secernin subfamily.

In Homo sapiens (Human), this protein is Secernin-2 (SCRN2).